Reading from the N-terminus, the 336-residue chain is N-lysine methyltransferase KMT5A (336 aa).

Positions 1–112 are disordered; the sequence is MGRGKKMSKP…KPSEQRETEC (112 aa). The segment covering 67 to 93 has biased composition (basic and acidic residues); it reads SVAHHESKCPGKPLTETRKKAEVEKKR. The 122-residue stretch at 200–321 folds into the SET domain; it reads EGMKMDMITG…VGEELLYDYG (122 aa). S-adenosyl-L-methionine-binding positions include 210–212, Y255, and 282–283; these read KGR and NH.

It belongs to the class V-like SAM-binding methyltransferase superfamily. Histone-lysine methyltransferase family. PR/SET subfamily.

It localises to the nucleus. Its subcellular location is the chromosome. It carries out the reaction L-lysyl(20)-[histone H4] + S-adenosyl-L-methionine = N(6)-methyl-L-lysyl(20)-[histone H4] + S-adenosyl-L-homocysteine + H(+). The catalysed reaction is L-lysyl-[protein] + S-adenosyl-L-methionine = N(6)-methyl-L-lysyl-[protein] + S-adenosyl-L-homocysteine + H(+). Protein-lysine N-methyltransferase that monomethylates both histones and non-histone proteins. Specifically monomethylates 'Lys-20' of histone H4 (H4K20me1). H4K20me1 is enriched during mitosis and represents a specific tag for epigenetic transcriptional repression. Mainly functions in euchromatin regions, thereby playing a central role in the silencing of euchromatic genes. Required for cell proliferation, probably by contributing to the maintenance of proper higher-order structure of DNA during mitosis. Involved in chromosome condensation and proper cytokinesis. Nucleosomes are preferred as substrate compared to free histones. Mediates monomethylation of p53/TP53 at 'Lys-382', leading to repress p53/TP53-target genes. Plays a negative role in TGF-beta response regulation and a positive role in cell migration. In Xenopus tropicalis (Western clawed frog), this protein is N-lysine methyltransferase KMT5A.